The primary structure comprises 741 residues: Protein O-mannosyl-transferase TMTC4 (741 aa).

Residues Met1 to His10 are Cytoplasmic-facing. A helical transmembrane segment spans residues Ile11–Leu31. At Cys32 to Asn110 the chain is on the extracellular side. N-linked (GlcNAc...) asparagine glycosylation is present at Asn77. The chain crosses the membrane as a helical span at residues Ile111–Gly131. At Leu132–Arg146 the chain is on the cytoplasmic side. 2 helical membrane-spanning segments follow: residues Ala147–Ala166 and Gly167–Leu185. Over Gly186 to Glu198 the chain is Cytoplasmic. The chain crosses the membrane as a helical span at residues Gly199–Leu219. The Extracellular segment spans residues Cys220 to Gly224. Residues Ile225–Leu245 traverse the membrane as a helical segment. The Cytoplasmic portion of the chain corresponds to Ala246–Lys265. Residues Asn266–Ile286 traverse the membrane as a helical segment. Topologically, residues Arg287 to Arg354 are extracellular. The helical transmembrane segment at Val355–Ser375 threads the bilayer. Residues Glu376–Arg382 lie on the Cytoplasmic side of the membrane. A helical transmembrane segment spans residues Ile383 to Phe403. Topologically, residues Arg404–Arg412 are extracellular. Residues Val413 to Ser433 traverse the membrane as a helical segment. The Cytoplasmic segment spans residues Arg434–Pro441. Residues Val442 to Gly462 traverse the membrane as a helical segment. The Extracellular portion of the chain corresponds to Glu463–Val741. TPR repeat units follow at residues Ala482–Tyr515, Val516–Phe549, Ala550–Tyr583, Pro584–His617, Ser618–Asp651, His652–Val685, and Ala686–Ala719. N-linked (GlcNAc...) asparagine glycosylation is present at Asn497. Asn609 is a glycosylation site (N-linked (GlcNAc...) asparagine). Asn725 is a glycosylation site (N-linked (GlcNAc...) asparagine).

It belongs to the TMTC family.

The protein resides in the membrane. Its subcellular location is the endoplasmic reticulum. It carries out the reaction a di-trans,poly-cis-dolichyl beta-D-mannosyl phosphate + L-seryl-[protein] = 3-O-(alpha-D-mannosyl)-L-seryl-[protein] + a di-trans,poly-cis-dolichyl phosphate + H(+). The catalysed reaction is a di-trans,poly-cis-dolichyl beta-D-mannosyl phosphate + L-threonyl-[protein] = 3-O-(alpha-D-mannosyl)-L-threonyl-[protein] + a di-trans,poly-cis-dolichyl phosphate + H(+). Its pathway is protein modification; protein glycosylation. In terms of biological role, transfers mannosyl residues to the hydroxyl group of serine or threonine residues. The 4 members of the TMTC family are O-mannosyl-transferases dedicated primarily to the cadherin superfamily, each member seems to have a distinct role in decorating the cadherin domains with O-linked mannose glycans at specific regions. Also acts as O-mannosyl-transferase on other proteins such as PDIA3. In Mus musculus (Mouse), this protein is Protein O-mannosyl-transferase TMTC4.